Consider the following 501-residue polypeptide: TNF receptor-associated factor 2 (501 aa).

At A2 the chain carries N-acetylalanine. S5 carries the post-translational modification Phosphoserine. T7 carries the phosphothreonine modification. Residue S11 is modified to Phosphoserine. T22 carries the post-translational modification Phosphothreonine. K31 participates in a covalent cross-link: Glycyl lysine isopeptide (Lys-Gly) (interchain with G-Cter in ubiquitin). The RING-type zinc-finger motif lies at 34–73; sequence CSACRNVLRRPFQAQCGHRYCSFCLASILSSGPQNCAACV. T117 carries the post-translational modification Phosphothreonine; by PKC. TRAF-type zinc fingers lie at residues 124–180 and 177–233; these read CHEG…AHHE and AHHE…EKQQ. The tract at residues 283 to 293 is important for interaction with BIRC2 and BIRC3; that stretch reads ENIVCVLNREV. A coiled-coil region spans residues 299 to 348; that stretch reads TAEACSRQHRLDQDKIEALSSKVQQLERSIGLKDLAMADLEQKVLEMEAS. Residue K320 forms a Glycyl lysine isopeptide (Lys-Gly) (interchain with G-Cter in ubiquitin) linkage. The MATH domain maps to 351-496; the sequence is DGVFIWKISD…DDAIFIKAIV (146 aa).

It belongs to the TNF receptor-associated factor family. A subfamily. In terms of assembly, homotrimer. Heterotrimer with TRAF1. Heterotrimer with TRAF3 (via TRAF domain). The domain containing the RING-type and the first TRAF-type zinc finger can also form homodimers (in vitro). Interacts with TNFRSF1B/TNFR2. Interacts with TNFRSF5/CD40. Interacts with TNFRSF4, TNFRSF7/CD27, TNFRSF8/CD30, TNFRSF9/CD137, TNFRSF11A/RANK, TNFRSF13B/TACI, TNFRSF14, TNFRSF16/NGFR, TNFRSF17/BCMA, TNFRSF18/AITR, TNFRSF19/TROY, TNFRSF19L/RELT and EDAR. Stimulation of TNF-alpha receptor TNFRSF1A leads to the formation of two distinct signaling complexes. Plasma membrane-bound complex I is composed of TNFRSF1A, TRADD, RIPK1, TRAF2 and BIRC2/c-IAP1 or BIRC3 which interacts with CHUCK/IKK-alpha, IKBKB/IKK-beta and IKBKG/IKK-gamma promoting cell survival. Subsequently, TRADD, RIPK1 and TRAF2 dissociate from TNFRSF1A and form cytoplasmic complex II with FADD and caspase CASP8 promoting cell apoptosis. Interacts with TRADD. Identified in a complex with TNFRSF1A, RIPK1 and IKBKB/IKK-beta. Interacts with RIPK2. Interacts with BIRC2 and BIRC3 N-terminus; a single BIRC2 or BIRC3 molecule interacts with a heterotrimer formed by TRAF1 and TRAF2, or a TRAF2 homotrimer. Identified in a complex composed of TRAF2, TRAF3, BIRC2 and BIRC3. Interacts with BIRC2; the interaction promotes BIRC2 stability. Interaction with BIRC2 and/or BIRC3 is essential for ubiquitination of IKBKE, degradation of NFKBIA and activation of NF-kappa-B. Within complex I, phosphorylated TRAF2 interacts (via 'Lys-63'-linked polyubiquitin chains) with CHUCK/IKK-alpha, IKBKB/IKK-beta, IKBKG/IKK-gamma TAB2, TAB3 and TAK1 in response to TNF-alpha stimulation. Within complex I, interacts with UXT isoform 1 (via TPQE motif); the interaction prevents the recruitment of FADD and CASP8/caspase 8 to complex I. Forms a complex composed of TNFRSF8/CD30 or TNFRSF1B/TNFR2, and TRAF1, TRAF2 and E3 ligase TRAIP. Within the complex, interacts with TRAIP; the interaction inhibits TRAF2-mediated NF-kappa B activation. Component of a complex composed of TANK and TBK1. Interacts with TRPC4AP. Interacts with MAP3K1/MEKK1, MAP3K5/ASK1 and MAP3K11/MLK3 in response to TNF-alpha stimulation; the interaction leads to JNK activation and interaction with MAP3K5 is inhibited by PRMT1. Component of a complex composed of MAP3K14/NIK BIRC3 and TRAF3; the interaction leads to BIRC2/3-mediated ubiquitination of TRAF3 upon CD40 engagement in a TRAF2-dependent manner. Interacts with MAP3K14/NIK in response to TNF-alpha stimulation; the interaction leads to NF-kappa B activation. Interacts with PEG3; the interaction may promote TRAF2-mediated NF-kappa B activation. Interacts with HIVEP3; the interaction may inhibit TNF-alpha-TRAF2-mediated NF-kappa B and JNK activation. Interacts with TANK/ITRAF; the interaction prevents interaction between TNFRSF1B/TNFR2 and TRAF2. Interacts with deubiquitinating enzyme CYLD; the interaction results in the deubiquitination and inactivation of TRAF2. Interacts with SIAH2; the interaction leads to TRAF2 ubiquitination and degradation. Interacts with E2 conjugating enzyme UBE2N/Ubc13, E3 ligase ITCH and RNF11 in response to TNF-alpha stimulation. Interacts with ubiquitin-editing enzyme TNFAIP3/A20 in response to TNF-alpha stimulation; the interaction promotes TRAF2 dissociation from UBE2N/Ubc13, ITCH, RNF11 and TAX1BP1 and prevents prolonged TRAF-2 ubiquitination. Interacts with TAX1BP1 in response to TNF-alpha stimulation; the interaction promotes TRAF2 dissociation from UBE2N/Ubc13 and TNFAIP3/A20, and prevents prolonged TRAF-2 ubiquitination. Interacts (via C-terminus) with EIF2AK2/PKR (via the kinase catalytic domain). Interacts with deubiquitinating enzyme USP48. Interacts with PTPN2; probably involved in TNF-mediated signaling. Interacts with Toll-like receptor TLR4/3 adapter TICAM1/TRIF; the interaction may promote TICAM1 ubiquitination. Interacts with kinase/endoribonuclease ERN1/IRE1 and DAB2IP in response to ER stress; the interaction requires DAB2IP. Interacts with ERN1/IRE1 and TAOK3 in response to ER stress; the interaction may promote TRAF2 phosphorylation. Interacts (via zinc fingers) with DAB2IP (via C-terminus PER domain)in response to TNF-alpha stimulation. Interacts with CASP8AP2/FLASH. Interacts with NFATC2IP; the interaction may repress IL-4 production in T cells. Interacts with kinase CDK9. Interacts with sphingosine kinase 1 SPHK1. Interacts with kinase TNIK. Interacts with TRAFD1. Interacts with DNA phosphodiesterase TDP2. Interacts with MAVS/IPS1. Interacts with CARD14. Interacts with Epstein-Barr virus LMP1/BNFL1. Interacts with GPS2. Interacts with XPNPEP3. Interacts with RIPK3. Interacts with RELL2. Interacts with LRRC19. Interacts with GAPDH; promoting TRAF2 ubiquitination. In terms of processing, phosphorylated at several serine residues within the first 128 amino acid residues. Phosphorylated at Thr-117 in response to signaling via TNF and TNFRSF1A. Phosphorylation at Thr-117 is required for 'Lys-63'-linked polyubiquitination, but not for 'Lys-48'-linked polyubiquitination. Phosphorylation at Thr-117 is important for interaction with IKKA and IKKB, activation of IKK and subsequent activation of NF-kappa-B. Undergoes both 'Lys-48'-linked and 'Lys-63'-linked polyubiquitination. Polyubiquitinated via 'Lys-63'-linked ubiquitin in response to TNF signaling; this requires prior phosphorylation at Thr-117. 'Lys-63'-linked polyubiquitination promotes TRAF2-mediated activation of NF-kappa-B. Can be polyubiquitinated at several Lys residues via 'Lys-48'-linked ubiquitin chains in response to TNF signaling, leading to proteasomal degradation. Autoubiquitinated, leading to its subsequent proteasomal degradation. Polyubiquitinated by BIRC2 and SIAH2, leading to its subsequent proteasomal degradation. Deubiquitinated by CYLD, a protease that specifically cleaves 'Lys-63'-linked polyubiquitin chains. Ubiquination is inhibited by LRRC19; inhibits proteasomal degradation. Ubiquitinated at Lys-320 by the SCF(FBXL2) complex, leading to its degradation by the proteasome. Ubiquitinated by E3 ubiquitin-protein ligase complex containing FBXO7; leading to repression of NF-kappa-B signaling.

Its subcellular location is the cytoplasm. The enzyme catalyses S-ubiquitinyl-[E2 ubiquitin-conjugating enzyme]-L-cysteine + [acceptor protein]-L-lysine = [E2 ubiquitin-conjugating enzyme]-L-cysteine + N(6)-ubiquitinyl-[acceptor protein]-L-lysine.. Its pathway is protein modification; protein ubiquitination. Its activity is regulated as follows. Has very low E3 ubiquitin ligase activity in the absence of sphingosine-1-phosphate. E3 ubiquitin ligase activity is strongly activated by cytoplasmic sphingosine-1-phosphate. Functionally, E3 ubiquitin-protein ligase that regulates activation of NF-kappa-B and JNK and plays a central role in the regulation of cell survival and apoptosis. Catalyzes 'Lys-63'-linked ubiquitination of target proteins, such as BIRC3, IKBKE, MLST8, RIPK1 and TICAM1. Is an essential constituent of several E3 ubiquitin-protein ligase complexes, where it promotes the ubiquitination of target proteins by bringing them into contact with other E3 ubiquitin ligases. Regulates BIRC2 and BIRC3 protein levels by inhibiting their autoubiquitination and subsequent degradation; this does not depend on the TRAF2 RING-type zinc finger domain. Plays a role in mediating activation of NF-kappa-B by EIF2AK2/PKR. In complex with BIRC2 or BIRC3, promotes ubiquitination of IKBKE. Acts as a regulator of mTORC1 and mTORC2 assembly by mediating 'Lys-63'-linked ubiquitination of MLST8, thereby inhibiting formation of the mTORC2 complex, while facilitating assembly of the mTORC1 complex. Required for normal antibody isotype switching from IgM to IgG. The sequence is that of TNF receptor-associated factor 2 from Homo sapiens (Human).